The sequence spans 177 residues: Peptide deformylase (177 aa).

Residues Cys99 and His141 each coordinate Fe cation. Residue Glu142 is part of the active site. His145 is a Fe cation binding site.

The protein belongs to the polypeptide deformylase family. Requires Fe(2+) as cofactor.

The catalysed reaction is N-terminal N-formyl-L-methionyl-[peptide] + H2O = N-terminal L-methionyl-[peptide] + formate. Removes the formyl group from the N-terminal Met of newly synthesized proteins. Requires at least a dipeptide for an efficient rate of reaction. N-terminal L-methionine is a prerequisite for activity but the enzyme has broad specificity at other positions. This is Peptide deformylase from Rhizorhabdus wittichii (strain DSM 6014 / CCUG 31198 / JCM 15750 / NBRC 105917 / EY 4224 / RW1) (Sphingomonas wittichii).